A 443-amino-acid polypeptide reads, in one-letter code: Exodeoxyribonuclease 7 large subunit (443 aa).

This sequence belongs to the XseA family. As to quaternary structure, heterooligomer composed of large and small subunits.

The protein localises to the cytoplasm. The catalysed reaction is Exonucleolytic cleavage in either 5'- to 3'- or 3'- to 5'-direction to yield nucleoside 5'-phosphates.. Bidirectionally degrades single-stranded DNA into large acid-insoluble oligonucleotides, which are then degraded further into small acid-soluble oligonucleotides. The chain is Exodeoxyribonuclease 7 large subunit from Vibrio vulnificus (strain CMCP6).